The chain runs to 170 residues: Heat shock protein beta-7 (170 aa).

A disordered region spans residues 1–39 (MSHRTSSTFRAERSFHSSSSSSSSSTSSSASRALPAQDP). Residues 1-71 (MSHRTSSTFR…PLAFPARPGG (71 aa)) form a required for localization to SC35 splicing speckles region. Residues 16–31 (HSSSSSSSSSTSSSAS) are compositionally biased toward low complexity. A sHSP domain is found at 62-170 (PLAFPARPGG…QQTFRTEIKI (109 aa)).

It belongs to the small heat shock protein (HSP20) family. As to quaternary structure, interacts with C-terminal domain of actin-binding protein 280. Isoform 1 is highly expressed in adult and fetal heart, skeletal muscle, and at a much lower levels in adipose tissue and in aorta. Undetectable in other tissues. Isoform 2 and isoform 3 are poorly detected in heart.

The protein localises to the cytoplasm. It is found in the nucleus. Its subcellular location is the cajal body. The sequence is that of Heat shock protein beta-7 (HSPB7) from Homo sapiens (Human).